Here is a 210-residue protein sequence, read N- to C-terminus: Redox-sensing transcriptional repressor Rex (210 aa).

The H-T-H motif DNA-binding region spans 16-55 (IYSRYLRQLIEEGVETVSSGEIAAGVGVSSAQVRKDLAYF). Residue 90-95 (GAGKLG) participates in NAD(+) binding.

It belongs to the transcriptional regulatory Rex family. In terms of assembly, homodimer.

The protein resides in the cytoplasm. Functionally, modulates transcription in response to changes in cellular NADH/NAD(+) redox state. The polypeptide is Redox-sensing transcriptional repressor Rex (Syntrophomonas wolfei subsp. wolfei (strain DSM 2245B / Goettingen)).